We begin with the raw amino-acid sequence, 213 residues long: Thiamine-phosphate synthase (213 aa).

Residues 38–42 and N70 each bind 4-amino-2-methyl-5-(diphosphooxymethyl)pyrimidine; that span reads QLRIK. Mg(2+) is bound by residues D71 and D90. Residue S109 participates in 4-amino-2-methyl-5-(diphosphooxymethyl)pyrimidine binding. Position 135 to 137 (135 to 137) interacts with 2-[(2R,5Z)-2-carboxy-4-methylthiazol-5(2H)-ylidene]ethyl phosphate; that stretch reads TQT. A 4-amino-2-methyl-5-(diphosphooxymethyl)pyrimidine-binding site is contributed by K138. Residues G168 and 188 to 189 contribute to the 2-[(2R,5Z)-2-carboxy-4-methylthiazol-5(2H)-ylidene]ethyl phosphate site; that span reads VS.

Belongs to the thiamine-phosphate synthase family. Mg(2+) is required as a cofactor.

It catalyses the reaction 2-[(2R,5Z)-2-carboxy-4-methylthiazol-5(2H)-ylidene]ethyl phosphate + 4-amino-2-methyl-5-(diphosphooxymethyl)pyrimidine + 2 H(+) = thiamine phosphate + CO2 + diphosphate. It carries out the reaction 2-(2-carboxy-4-methylthiazol-5-yl)ethyl phosphate + 4-amino-2-methyl-5-(diphosphooxymethyl)pyrimidine + 2 H(+) = thiamine phosphate + CO2 + diphosphate. The catalysed reaction is 4-methyl-5-(2-phosphooxyethyl)-thiazole + 4-amino-2-methyl-5-(diphosphooxymethyl)pyrimidine + H(+) = thiamine phosphate + diphosphate. It functions in the pathway cofactor biosynthesis; thiamine diphosphate biosynthesis; thiamine phosphate from 4-amino-2-methyl-5-diphosphomethylpyrimidine and 4-methyl-5-(2-phosphoethyl)-thiazole: step 1/1. Its function is as follows. Condenses 4-methyl-5-(beta-hydroxyethyl)thiazole monophosphate (THZ-P) and 2-methyl-4-amino-5-hydroxymethyl pyrimidine pyrophosphate (HMP-PP) to form thiamine monophosphate (TMP). This is Thiamine-phosphate synthase from Pectobacterium atrosepticum (strain SCRI 1043 / ATCC BAA-672) (Erwinia carotovora subsp. atroseptica).